A 199-amino-acid chain; its full sequence is Pyridoxine/pyridoxamine 5'-phosphate oxidase (199 aa).

Residues 44–49 (RTVLLK), 59–60 (YS), lysine 66, and glutamine 91 each bind FMN. A substrate-binding site is contributed by lysine 49. The substrate site is built by tyrosine 109, arginine 113, and serine 117. FMN-binding positions include 126-127 (QS) and tryptophan 171. 177–179 (RLH) provides a ligand contact to substrate. Residue arginine 181 participates in FMN binding.

It belongs to the pyridoxamine 5'-phosphate oxidase family. In terms of assembly, homodimer. The cofactor is FMN.

It carries out the reaction pyridoxamine 5'-phosphate + O2 + H2O = pyridoxal 5'-phosphate + H2O2 + NH4(+). The catalysed reaction is pyridoxine 5'-phosphate + O2 = pyridoxal 5'-phosphate + H2O2. The protein operates within cofactor metabolism; pyridoxal 5'-phosphate salvage; pyridoxal 5'-phosphate from pyridoxamine 5'-phosphate: step 1/1. It functions in the pathway cofactor metabolism; pyridoxal 5'-phosphate salvage; pyridoxal 5'-phosphate from pyridoxine 5'-phosphate: step 1/1. Its function is as follows. Catalyzes the oxidation of either pyridoxine 5'-phosphate (PNP) or pyridoxamine 5'-phosphate (PMP) into pyridoxal 5'-phosphate (PLP). In Xanthomonas oryzae pv. oryzae (strain KACC10331 / KXO85), this protein is Pyridoxine/pyridoxamine 5'-phosphate oxidase.